Reading from the N-terminus, the 518-residue chain is Glutamate--cysteine ligase (518 aa).

The protein belongs to the glutamate--cysteine ligase type 1 family. Type 1 subfamily.

The catalysed reaction is L-cysteine + L-glutamate + ATP = gamma-L-glutamyl-L-cysteine + ADP + phosphate + H(+). It functions in the pathway sulfur metabolism; glutathione biosynthesis; glutathione from L-cysteine and L-glutamate: step 1/2. This is Glutamate--cysteine ligase from Cronobacter sakazakii (strain ATCC BAA-894) (Enterobacter sakazakii).